Here is a 559-residue protein sequence, read N- to C-terminus: Germacrene A synthase 1 (559 aa).

5 residues coordinate Mg(2+): aspartate 312, aspartate 316, aspartate 456, threonine 460, and glutamate 464. The DDXXD motif motif lies at 312–316 (DDTYD).

This sequence belongs to the terpene synthase family. Monomer. Mg(2+) serves as cofactor. As to expression, mainly expressed in sunflower trichomes.

The enzyme catalyses (2E,6E)-farnesyl diphosphate = (+)-(R)-germacrene A + diphosphate. Its pathway is secondary metabolite biosynthesis; terpenoid biosynthesis. Its function is as follows. Sesquiterpene synthase involved in germacrene A biosynthesis. Germacrene A is a precursor of several sesquiterpene lactones. The sequence is that of Germacrene A synthase 1 from Helianthus annuus (Common sunflower).